The chain runs to 404 residues: Exodeoxyribonuclease 7 large subunit (404 aa).

This sequence belongs to the XseA family. Heterooligomer composed of large and small subunits.

Its subcellular location is the cytoplasm. The enzyme catalyses Exonucleolytic cleavage in either 5'- to 3'- or 3'- to 5'-direction to yield nucleoside 5'-phosphates.. Its function is as follows. Bidirectionally degrades single-stranded DNA into large acid-insoluble oligonucleotides, which are then degraded further into small acid-soluble oligonucleotides. The protein is Exodeoxyribonuclease 7 large subunit of Tropheryma whipplei (strain TW08/27) (Whipple's bacillus).